A 505-amino-acid polypeptide reads, in one-letter code: Bifunctional pantoate ligase/cytidylate kinase (505 aa).

The pantoate--beta-alanine ligase stretch occupies residues 1 to 268 (MHQWRKHQQS…CGETRLIDHT (268 aa)). 18–25 (MGALHRGH) provides a ligand contact to ATP. The active-site Proton donor is histidine 25. Glutamine 53 contributes to the (R)-pantoate binding site. Glutamine 53 provides a ligand contact to beta-alanine. 142 to 145 (GEKD) lines the ATP pocket. Residue glutamine 148 coordinates (R)-pantoate. Residues valine 171 and 179-182 (CSSR) contribute to the ATP site. The segment at 269 to 505 (FLMSRQPIVA…PEEVWPTAGR (237 aa)) is cytidylate kinase.

In the N-terminal section; belongs to the pantothenate synthetase family. This sequence in the C-terminal section; belongs to the cytidylate kinase family. Type 1 subfamily.

It is found in the cytoplasm. The catalysed reaction is (R)-pantoate + beta-alanine + ATP = (R)-pantothenate + AMP + diphosphate + H(+). It carries out the reaction CMP + ATP = CDP + ADP. It catalyses the reaction dCMP + ATP = dCDP + ADP. It functions in the pathway cofactor biosynthesis; (R)-pantothenate biosynthesis; (R)-pantothenate from (R)-pantoate and beta-alanine: step 1/1. Functionally, catalyzes the condensation of pantoate with beta-alanine in an ATP-dependent reaction via a pantoyl-adenylate intermediate. Its function is as follows. Catalyzes the transfer of a phosphate group from ATP to either CMP or dCMP to form CDP or dCDP and ADP, respectively. In Prochlorococcus marinus (strain MIT 9313), this protein is Bifunctional pantoate ligase/cytidylate kinase.